The chain runs to 199 residues: Imidazoleglycerol-phosphate dehydratase (199 aa).

It belongs to the imidazoleglycerol-phosphate dehydratase family.

The protein localises to the cytoplasm. The catalysed reaction is D-erythro-1-(imidazol-4-yl)glycerol 3-phosphate = 3-(imidazol-4-yl)-2-oxopropyl phosphate + H2O. It functions in the pathway amino-acid biosynthesis; L-histidine biosynthesis; L-histidine from 5-phospho-alpha-D-ribose 1-diphosphate: step 6/9. The protein is Imidazoleglycerol-phosphate dehydratase of Rhodospirillum rubrum (strain ATCC 11170 / ATH 1.1.1 / DSM 467 / LMG 4362 / NCIMB 8255 / S1).